A 204-amino-acid polypeptide reads, in one-letter code: Thymidylate kinase (204 aa).

13-20 contacts ATP; sequence GIDGSGKS.

This sequence belongs to the thymidylate kinase family.

The enzyme catalyses dTMP + ATP = dTDP + ADP. Its function is as follows. Phosphorylation of dTMP to form dTDP in both de novo and salvage pathways of dTTP synthesis. This chain is Thymidylate kinase, found in Leptospira interrogans serogroup Icterohaemorrhagiae serovar copenhageni (strain Fiocruz L1-130).